Here is a 320-residue protein sequence, read N- to C-terminus: Cytochrome f (320 aa).

An N-terminal signal peptide occupies residues 1 to 35; the sequence is MQNRNFNNLIIKWAIRLISIMIIINTIFWSSISEA. Heme-binding residues include Phe-36, Cys-56, Cys-59, and His-60. The helical transmembrane segment at 286 to 305 threads the bilayer; sequence IQGLLLFFGSVILAQIFLVL.

This sequence belongs to the cytochrome f family. The 4 large subunits of the cytochrome b6-f complex are cytochrome b6, subunit IV (17 kDa polypeptide, petD), cytochrome f and the Rieske protein, while the 4 small subunits are PetG, PetL, PetM and PetN. The complex functions as a dimer. It depends on heme as a cofactor.

It localises to the plastid. The protein resides in the chloroplast thylakoid membrane. In terms of biological role, component of the cytochrome b6-f complex, which mediates electron transfer between photosystem II (PSII) and photosystem I (PSI), cyclic electron flow around PSI, and state transitions. The sequence is that of Cytochrome f (petA) from Marchantia polymorpha (Common liverwort).